We begin with the raw amino-acid sequence, 655 residues long: Probable alpha-galactosidase D (655 aa).

The first 16 residues, 1–16 (MASVIALSLLLPAAFA), serve as a signal peptide directing secretion. N-linked (GlcNAc...) asparagine glycosylation is found at Asn87 and Asn93. Cysteines 126 and 153 form a disulfide. Catalysis depends on Asp151, which acts as the Nucleophile. 196–200 (EWGID) contacts substrate. The active-site Proton donor is the Asp218. N-linked (GlcNAc...) asparagine glycans are attached at residues Asn432, Asn482, Asn502, Asn540, and Asn579.

It belongs to the glycosyl hydrolase 27 family.

It localises to the secreted. It catalyses the reaction Hydrolysis of terminal, non-reducing alpha-D-galactose residues in alpha-D-galactosides, including galactose oligosaccharides, galactomannans and galactolipids.. Functionally, hydrolyzes a variety of simple alpha-D-galactoside as well as more complex molecules such as oligosaccharides and polysaccharides. This is Probable alpha-galactosidase D (aglD) from Aspergillus terreus (strain NIH 2624 / FGSC A1156).